We begin with the raw amino-acid sequence, 2528 residues long: Reducing polyketide synthase PKS1 (2528 aa).

A Ketosynthase family 3 (KS3) domain is found at 11 to 436 (ITPIAVVGMS…GANVHAILES (426 aa)). Active-site for beta-ketoacyl synthase activity residues include Cys-186, His-321, and His-359. The segment at 573–868 (FVFTGQGAQW…LGGPISQVID (296 aa)) is malonyl-CoA:ACP transacylase (MAT). The tract at residues 954-1092 (LDLIGVFDVH…GLISVLKSSK (139 aa)) is N-terminal hotdog fold. The PKS/mFAS DH domain maps to 954 to 1278 (LDLIGVFDVH…LVALDRPNSS (325 aa)). The dehydratase (DH) domain stretch occupies residues 956–1277 (LIGVFDVHSS…TLVALDRPNS (322 aa)). His-986 serves as the catalytic Proton acceptor; for dehydratase activity. A C-terminal hotdog fold region spans residues 1122-1278 (KTEWDVKDMY…LVALDRPNSS (157 aa)). Residue Asp-1187 is the Proton donor; for dehydratase activity of the active site. Positions 1827–2139 (GLLDSLHFTV…TGRHMGKMVA (313 aa)) are enoyl reductase (ER) domain. Residues 2164 to 2341 (ASYLLVGGVG…ATVIDIGAVH (178 aa)) are ketoreductase (KR) domain. Positions 2442-2519 (SAVTIVLSAL…ALAVKIAARS (78 aa)) constitute a Carrier domain. At Ser-2479 the chain carries O-(pantetheine 4'-phosphoryl)serine.

The protein operates within mycotoxin biosynthesis. Functionally, reducing polyketide synthase (PKS); part of the Tox1A locus, one of the 2 loci that mediate the biosynthesis of T-toxin, a family of linear polyketides 37 to 45 carbons in length, of which the major component is 41 carbons, and which leads to high virulence to maize. One of the PKSs (PKS1 or PKS2) could synthesize a precursor, used subsequently by the other PKS as starter unit, to add additional carbons. Variability in the length of the final carbon backbone C35-47 could be achieved by varying the number of condensation cycles, or use of different starter or extender units or might be due to decarboxylation of the penultimate product, catalyzed by DEC1. Additional proteins are required for the biosynthesis of T-toxin, including oxidoreductases RED1, RED2, RED3, LAM1 and OXI1, as well as esterase TOX9. This chain is Reducing polyketide synthase PKS1, found in Cochliobolus heterostrophus (strain C4 / ATCC 48331 / race T) (Southern corn leaf blight fungus).